Reading from the N-terminus, the 547-residue chain is CTP synthase (547 aa).

The tract at residues 1–265 (MARFIFITGG…DQAVLDAFGI (265 aa)) is amidoligase domain. Ser-13 lines the CTP pocket. Ser-13 provides a ligand contact to UTP. ATP is bound by residues 14 to 19 (SLGKGL) and Asp-71. Residues Asp-71 and Glu-139 each contribute to the Mg(2+) site. Residues 146–148 (DIE), 186–191 (KTKPTQ), and Lys-222 each bind CTP. Residues 186–191 (KTKPTQ) and Lys-222 contribute to the UTP site. Residues 291 to 546 (KVAIVGKYTQ…VRAAKENSRL (256 aa)) form the Glutamine amidotransferase type-1 domain. Gly-353 provides a ligand contact to L-glutamine. Cys-380 functions as the Nucleophile; for glutamine hydrolysis in the catalytic mechanism. L-glutamine is bound by residues 381–384 (LGMQ), Glu-404, and Arg-474. Active-site residues include His-519 and Glu-521.

Belongs to the CTP synthase family. In terms of assembly, homotetramer.

It catalyses the reaction UTP + L-glutamine + ATP + H2O = CTP + L-glutamate + ADP + phosphate + 2 H(+). It carries out the reaction L-glutamine + H2O = L-glutamate + NH4(+). The enzyme catalyses UTP + NH4(+) + ATP = CTP + ADP + phosphate + 2 H(+). It participates in pyrimidine metabolism; CTP biosynthesis via de novo pathway; CTP from UDP: step 2/2. Allosterically activated by GTP, when glutamine is the substrate; GTP has no effect on the reaction when ammonia is the substrate. The allosteric effector GTP functions by stabilizing the protein conformation that binds the tetrahedral intermediate(s) formed during glutamine hydrolysis. Inhibited by the product CTP, via allosteric rather than competitive inhibition. Catalyzes the ATP-dependent amination of UTP to CTP with either L-glutamine or ammonia as the source of nitrogen. Regulates intracellular CTP levels through interactions with the four ribonucleotide triphosphates. This is CTP synthase from Jannaschia sp. (strain CCS1).